The following is a 357-amino-acid chain: Probable cinnamyl alcohol dehydrogenase 2 (357 aa).

Cysteine 47 lines the Zn(2+) pocket. NADP(+) is bound at residue serine 49. Residues histidine 69, glutamate 70, cysteine 100, cysteine 103, cysteine 106, cysteine 114, and cysteine 163 each contribute to the Zn(2+) site. Residues threonine 167, 188–193 (GLGGVG), 211–216 (SSSDKK), threonine 251, glycine 275, and 298–300 (SFI) each bind NADP(+).

It belongs to the zinc-containing alcohol dehydrogenase family. Homodimer. The cofactor is Zn(2+).

The catalysed reaction is (E)-cinnamyl alcohol + NADP(+) = (E)-cinnamaldehyde + NADPH + H(+). It catalyses the reaction (E)-coniferol + NADP(+) = (E)-coniferaldehyde + NADPH + H(+). It carries out the reaction (E)-sinapyl alcohol + NADP(+) = (E)-sinapaldehyde + NADPH + H(+). The enzyme catalyses (E)-4-coumaroyl alcohol + NADP(+) = (E)-4-coumaraldehyde + NADPH + H(+). The catalysed reaction is (E)-caffeyl alcohol + NADP(+) = (E)-caffeyl aldehyde + NADPH + H(+). It participates in aromatic compound metabolism; phenylpropanoid biosynthesis. Its function is as follows. Involved in lignin biosynthesis. Catalyzes the final step specific for the production of lignin monomers. Catalyzes the NADPH-dependent reduction of coniferaldehyde, 5-hydroxyconiferaldehyde, sinapaldehyde, 4-coumaraldehyde and caffeyl aldehyde to their respective alcohols. In Picea abies (Norway spruce), this protein is Probable cinnamyl alcohol dehydrogenase 2 (CAD2).